The sequence spans 464 residues: ATP synthase subunit beta (464 aa).

152–159 (GGAGVGKT) is an ATP binding site.

It belongs to the ATPase alpha/beta chains family. In terms of assembly, F-type ATPases have 2 components, CF(1) - the catalytic core - and CF(0) - the membrane proton channel. CF(1) has five subunits: alpha(3), beta(3), gamma(1), delta(1), epsilon(1). CF(0) has three main subunits: a(1), b(2) and c(9-12). The alpha and beta chains form an alternating ring which encloses part of the gamma chain. CF(1) is attached to CF(0) by a central stalk formed by the gamma and epsilon chains, while a peripheral stalk is formed by the delta and b chains.

It localises to the cell membrane. The enzyme catalyses ATP + H2O + 4 H(+)(in) = ADP + phosphate + 5 H(+)(out). Its function is as follows. Produces ATP from ADP in the presence of a proton gradient across the membrane. The catalytic sites are hosted primarily by the beta subunits. The sequence is that of ATP synthase subunit beta from Clostridioides difficile (strain 630) (Peptoclostridium difficile).